A 290-amino-acid chain; its full sequence is Large ribosomal subunit protein uL3 (290 aa).

Glutamine 152 is modified (N5-methylglutamine). Residues 250–290 are disordered; it reads ARLAEEQAAAEAESLAQAEAEIAAEGSDAAPEGDADKKDGE. A compositionally biased stretch (low complexity) spans 255-274; the sequence is EQAAAEAESLAQAEAEIAAE.

It belongs to the universal ribosomal protein uL3 family. Part of the 50S ribosomal subunit. Forms a cluster with proteins L14 and L19. In terms of processing, methylated by PrmB.

In terms of biological role, one of the primary rRNA binding proteins, it binds directly near the 3'-end of the 23S rRNA, where it nucleates assembly of the 50S subunit. This Jannaschia sp. (strain CCS1) protein is Large ribosomal subunit protein uL3.